Here is a 265-residue protein sequence, read N- to C-terminus: Polyglutamine-binding protein 1 (265 aa).

Positions 46–80 (EGLPPSWYKVFDPSCGLPYYWNADTDLVSWLSPHD) constitute a WW domain. Ser-94 carries the phosphoserine modification. The tract at residues 94–265 (SSNADAEEKL…AEASRTKQQD (172 aa)) is disordered. Residues 99–175 (AEEKLDRSHD…DKADREEGKE (77 aa)) are compositionally biased toward basic and acidic residues. 15 repeat units span residues 104-110 (DRSHDKS), 111-117 (DRGHDKS), 118-124 (DRSHEKL), 125-131 (DRGHDKS), 132-138 (DRGHDKS), 139-140 (DR), 141-142 (DR), 143-144 (ER), 150-151 (DR), 152-153 (ER), 154-155 (ER), 156-157 (DR), 158-159 (ER), 160-161 (DR), and 162-163 (DR). The 5 X 7 AA approximate tandem repeats of D-R-[SG]-H-D-K-S stretch occupies residues 104-138 (DRSHDKSDRGHDKSDRSHEKLDRGHDKSDRGHDKS). Residues 139–144 (DRDRER) form a 3 X 2 AA tandem repeats of [DE]-R region. The interval 150–163 (DRERERDRERDRDR) is 7 X 2 AA tandem repeats of [DE]-R. The interval 245-255 (YPSPGAVLRAN) is important for interaction with TXNL4A. Ser-247 is modified (phosphoserine).

As to quaternary structure, interacts with POU3F2/Brn-2, ATXN1, TXNL4A, HTT and AR. Interaction with ATXN1 correlates positively with the length of the polyglutamine tract. Interacts with RNA polymerase II large subunit in a phosphorylation-dependent manner. Forms a ternary complex with ATXN1 mutant and phosphorylated RNA polymerase II. Interacts (via C-terminus) with TXNL4A and CD2BP2. Interacts (via WW domain) with ATN1 and SF3B1, and may interact with additional splice factors. Interacts (via WW domain) with WBP11; Leading to reduce interaction between PQBP1 and TXNL4A. Interacts with CAPRIN1. Interacts with DDX1. Interacts with SFPQ. Interacts with KHSRP.

The protein resides in the nucleus. Its subcellular location is the nucleus speckle. It localises to the cytoplasmic granule. In terms of biological role, intrinsically disordered protein that acts as a scaffold, and which is involved in different processes, such as pre-mRNA splicing, transcription regulation, innate immunity and neuron development. Interacts with splicing-related factors via the intrinsically disordered region and regulates alternative splicing of target pre-mRNA species. May suppress the ability of POU3F2 to transactivate the DRD1 gene in a POU3F2 dependent manner. Can activate transcription directly or via association with the transcription machinery. May be involved in ATXN1 mutant-induced cell death. The interaction with ATXN1 mutant reduces levels of phosphorylated RNA polymerase II large subunit. Involved in the assembly of cytoplasmic stress granule, possibly by participating in the transport of neuronal RNA granules. Also acts as an innate immune sensor of infection by retroviruses, by detecting the presence of reverse-transcribed DNA in the cytosol. Directly binds retroviral reverse-transcribed DNA in the cytosol and interacts with CGAS, leading to activate the cGAS-STING signaling pathway, triggering type-I interferon production. This chain is Polyglutamine-binding protein 1 (PQBP1), found in Gorilla gorilla gorilla (Western lowland gorilla).